Reading from the N-terminus, the 264-residue chain is Leukocyte receptor cluster member 1 (264 aa).

2 disordered regions span residues Met1–Arg37 and Phe49–Val76. Positions Arg12–Arg37 are enriched in basic and acidic residues. The stretch at Asn16–Arg46 forms a coiled coil. Ser59 bears the Phosphoserine mark. Positions Ser59 to Pro75 are enriched in low complexity. Positions Val89–Thr115 form a coiled coil. The disordered stretch occupies residues Gly118 to His264. Composition is skewed to basic and acidic residues over residues Pro146–Lys162 and His170–Ala214. Residues Leu196–Gln222 adopt a coiled-coil conformation. A Phosphoserine modification is found at Ser245.

In Homo sapiens (Human), this protein is Leukocyte receptor cluster member 1 (LENG1).